Reading from the N-terminus, the 176-residue chain is Large ribosomal subunit protein eL20 (176 aa).

Residue lysine 11 forms a Glycyl lysine isopeptide (Lys-Gly) (interchain with G-Cter in SUMO2) linkage. Tyrosine 63 bears the Phosphotyrosine mark. Position 71 is a phosphoserine (serine 71). Lysine 76 bears the N6-succinyllysine mark. Serine 123 is modified (phosphoserine). Residues lysine 128 and lysine 170 each participate in a glycyl lysine isopeptide (Lys-Gly) (interchain with G-Cter in SUMO2) cross-link.

The protein belongs to the eukaryotic ribosomal protein eL20 family. In terms of assembly, component of the large ribosomal subunit. Binds IPO9 with high affinity.

It localises to the cytoplasm. In terms of biological role, component of the large ribosomal subunit. The ribosome is a large ribonucleoprotein complex responsible for the synthesis of proteins in the cell. The polypeptide is Large ribosomal subunit protein eL20 (RPL18A) (Oryctolagus cuniculus (Rabbit)).